A 360-amino-acid chain; its full sequence is Photosystem II protein D1 (360 aa).

3 consecutive transmembrane segments (helical) span residues 30–47 (YVGW…AAAA), 119–134 (HFLI…QWEL), and 143–157 (WICV…AAFA). H119 serves as a coordination point for chlorophyll a. Y127 is a pheophytin a binding site. [CaMn4O5] cluster-binding residues include D171 and E190. Residues 198–219 (FHMAGVAGMFGGSLFSAMHGSL) form a helical membrane-spanning segment. Residue H199 participates in chlorophyll a binding. A quinone contacts are provided by residues H216 and 265–266 (SF). H216 lines the Fe cation pocket. H273 is a binding site for Fe cation. A helical membrane pass occupies residues 275-289 (FLAVFPVVCVWLTSM). [CaMn4O5] cluster-binding residues include H333, E334, D343, and A345. The propeptide occupies 346 to 360 (AAESTTVALSAPAIG).

This sequence belongs to the reaction center PufL/M/PsbA/D family. As to quaternary structure, PSII is composed of 1 copy each of membrane proteins PsbA, PsbB, PsbC, PsbD, PsbE, PsbF, PsbH, PsbI, PsbJ, PsbK, PsbL, PsbM, PsbT, PsbX, PsbY, Psb30/Ycf12, peripheral proteins PsbO, CyanoQ (PsbQ), PsbU, PsbV and a large number of cofactors. It forms dimeric complexes. It depends on The D1/D2 heterodimer binds P680, chlorophylls that are the primary electron donor of PSII, and subsequent electron acceptors. It shares a non-heme iron and each subunit binds pheophytin, quinone, additional chlorophylls, carotenoids and lipids. D1 provides most of the ligands for the Mn4-Ca-O5 cluster of the oxygen-evolving complex (OEC). There is also a Cl(-1) ion associated with D1 and D2, which is required for oxygen evolution. The PSII complex binds additional chlorophylls, carotenoids and specific lipids. as a cofactor. Post-translationally, tyr-162 forms a radical intermediate that is referred to as redox-active TyrZ, YZ or Y-Z. In terms of processing, C-terminally processed by CtpA; processing is essential to allow assembly of the oxygen-evolving complex and thus photosynthetic growth.

The protein resides in the cellular thylakoid membrane. The catalysed reaction is 2 a plastoquinone + 4 hnu + 2 H2O = 2 a plastoquinol + O2. Photosystem II (PSII) is a light-driven water:plastoquinone oxidoreductase that uses light energy to abstract electrons from H(2)O, generating O(2) and a proton gradient subsequently used for ATP formation. It consists of a core antenna complex that captures photons, and an electron transfer chain that converts photonic excitation into a charge separation. The D1/D2 (PsbA/PsbD) reaction center heterodimer binds P680, the primary electron donor of PSII as well as several subsequent electron acceptors. This Prochlorococcus marinus (strain MIT 9312) protein is Photosystem II protein D1.